A 252-amino-acid polypeptide reads, in one-letter code: Tricin synthase 1 (252 aa).

Residues serine 65, glutamate 87, 89–90 (GV), serine 95, and aspartate 113 each bind S-adenosyl-L-methionine. Aspartate 168 serves as a coordination point for a divalent metal cation. Aspartate 170 contributes to the S-adenosyl-L-methionine binding site. Aspartate 194 and asparagine 195 together coordinate a divalent metal cation.

This sequence belongs to the class I-like SAM-binding methyltransferase superfamily. Cation-dependent O-methyltransferase family. CCoAMT subfamily. Mg(2+) is required as a cofactor. It depends on Mn(2+) as a cofactor. Requires Co(2+) as cofactor. In terms of tissue distribution, ubiquitous. Highest expression in stems and roots.

Its subcellular location is the nucleus. The catalysed reaction is tricetin + 2 S-adenosyl-L-methionine = 3',5'-di-O-methyltricetin + 2 S-adenosyl-L-homocysteine + 2 H(+). Functionally, catalyzes the stepwise methylation of tricetin to its 3'-mono- and 3',5'-dimethyl ethers. No 3',4',5'-trimethylated ester derivatives are produced. Can use caffeoyl-CoA, 5-hydroxyferulic acid, luteolin, tricetin, quercetin, myrcetin and 7,8-dihydroxyflavone as substrates, but not naringenin, apigenin or kaempferol. The 2,3-double bond and the O-dihydroxyl group of the substrate are both required for catalytic activity of the enzyme. This Oryza sativa subsp. japonica (Rice) protein is Tricin synthase 1 (ROMT-15).